Consider the following 281-residue polypeptide: Shikimate dehydrogenase (NADP(+)) (281 aa).

Shikimate contacts are provided by residues 14 to 16 and Thr61; that span reads SKS. Lys65 functions as the Proton acceptor in the catalytic mechanism. Shikimate is bound by residues Asn86 and Asp105. NADP(+) contacts are provided by residues 130-134, 154-159, and Met221; these read GAGGA and NRTAAK. Tyr223 is a shikimate binding site. Gly245 serves as a coordination point for NADP(+).

Belongs to the shikimate dehydrogenase family. In terms of assembly, homodimer.

It catalyses the reaction shikimate + NADP(+) = 3-dehydroshikimate + NADPH + H(+). The protein operates within metabolic intermediate biosynthesis; chorismate biosynthesis; chorismate from D-erythrose 4-phosphate and phosphoenolpyruvate: step 4/7. In terms of biological role, involved in the biosynthesis of the chorismate, which leads to the biosynthesis of aromatic amino acids. Catalyzes the reversible NADPH linked reduction of 3-dehydroshikimate (DHSA) to yield shikimate (SA). This is Shikimate dehydrogenase (NADP(+)) from Azoarcus sp. (strain BH72).